Reading from the N-terminus, the 537-residue chain is Endoprotease aex-5 (537 aa).

The first 17 residues, 1–17 (MKLIFLLLLFGVSPIVC), serve as a signal peptide directing secretion. The propeptide occupies 18–99 (QDFEDGVFLA…KLQGFRRYKR (82 aa)). A Peptidase S8 domain is found at 111–413 (VWNLTPSLYI…FGLLNAQKLV (303 aa)). The N-linked (GlcNAc...) asparagine glycan is linked to asparagine 129. Active-site charge relay system residues include aspartate 139 and histidine 178. The cysteines at positions 286 and 316 are disulfide-linked. Residue serine 346 is the Charge relay system of the active site. N-linked (GlcNAc...) asparagine glycosylation occurs at asparagine 380. The region spanning 407–537 (LNAQKLVVMA…KMFKVVGTMS (131 aa)) is the P/Homo B domain.

It belongs to the peptidase S8 family. Furin subfamily.

It localises to the secreted. Probable serine endoprotease which cleaves preproteins at paired basic amino acids. May process FMRFamide-like (flp) and neuropeptide-like protein (nlp) neuropeptides. In muscles, involved in neuronal retrograde signaling by regulating presynaptic activity and localization of synaptic vesicle fusion protein unc-13 at the neuromuscular junction (NMJ). Acts in the intestine to regulate anterior body muscle contractions (aBOC) and the expulsion steps during the defecation motor program (DMP). Probably by regulating DMP, required for fatty acid uptake by intestinal cells and therefore regulates the levels of triglycerides in the intestine. Plays a role in locomotion. This chain is Endoprotease aex-5, found in Caenorhabditis elegans.